We begin with the raw amino-acid sequence, 41 residues long: Cuticle protein 32 (41 aa).

A run of 4 repeats spans residues 17–20, 25–28, 31–34, and 38–41.

Component of the cuticle of migratory locust which contains more than 100 different structural proteins. In Locusta migratoria (Migratory locust), this protein is Cuticle protein 32.